We begin with the raw amino-acid sequence, 303 residues long: Scaffolding protein (303 aa).

Residues 1-74 (MEPTTEIQAT…RRRIERKRQR (74 aa)) are post-transcriptional autoregulatory domain. The interaction with the capsid protein stretch occupies residues 275–303 (AIRKQMDAAASKGDVETYRKLKAKLKGIR).

Homodimer. Homotetramer. Interacts with the portal protein; this interaction initiates procapsid assembly, thereby ensuring incorporation of only one portal ring per capsid. Interacts (via C-terminus) with the capsid protein; this interaction allow to form the procapsid, in which the scaffolding protein forms an internal shell in the icosahedrally arranged capsid protein subunits.

In terms of biological role, required for procapsid assembly. The interior of the prohead is filled with the scaffolding protein. The scaffolding protein is lost from the structure during packaging. Scaffolding protein exit is followed by the expansion of the procapsid into a mature capsid. This Salmonella typhimurium (Bacteriophage P22) protein is Scaffolding protein (8).